The chain runs to 918 residues: MKVARFQKIPNVENETMIPVLTSKRASELAVSEVAGLLQADLQNGLNKSEVSHRRAFHGWNEFDISEDEPLWKKYISQFKNPLIMLLLASAVISILMRQFDDAVSITVAIVIVVTVAFVQEYRSEKSLEELSKLVPPECHCVREGKLEHTLARDLVPGDTVCLSVGDRVPADLRLFEAVDLSVDESSLTGETAPCSKVTAPQPAANGDLASRSNIAFMGTLVRCGKAKGIVIGTGENSEFGEVFKMMQAEEAPKTPLQKSMDLLGKQLSFYSFGIIGIIMLVGWLLGKDILEMFTISVSLAVAAIPEGLPIVVTVTLALGVMRMVKKRAIVKKLPIVETLGCCNVICSDKTGTLTKNEMTVTHILTSDGLHAEVTGVGYNQFGEVIVDGDVVHGFYNPAVSRIVEAGCVCNDAVIRNNTLMGKPTEGALIALAMKMGLDGLQQDYIRKAEYPFSSEQKWMAVKCVHRTQQDRPEICFMKGAYEQVIKYCTTYNSKGQTLALTQQQRDLYQQEKARMGSAGLRVLALASGPELGQLTFLGLVGIIDPPRTGVKEAVTTLIASGVSIKMITGDSQETAIAIASRLGLYSKTSQSVSGEEVDTMEVQHLSQIVPKVAVFYRASPRHKMKIIKSLQKNGAVVAMTGDGVNDAVALKAADIGVAMGQTGTDVCKEAADMILVDDDFQTIMSAIEEGKGIYNNIKNFVRFQLSTSIAALTLISLATLMNFPNPLNAMQILWINIIMDGPPAQSLGVEPVDKDVIRKPPRNWKDSILTKNLILKILVSSIIIVCGTLFVFWRELRDNVITPRDTTMTFTCFVFFDMFNALSSRSQTKSVFEIGLCSNKMFCYAVLGSIMGQLLVIYFPPLQKVFQTESLSILDLLFLLGLTSSVCIVSEIIKKVERSREKVQKNAGSASSSFLEV.

Over 1–78 (MKVARFQKIP…EPLWKKYISQ (78 aa)) the chain is Cytoplasmic. Residues 79 to 95 (FKNPLIMLLLASAVISI) traverse the membrane as a helical segment. The Extracellular portion of the chain corresponds to 96–99 (LMRQ). A helical membrane pass occupies residues 100 to 121 (FDDAVSITVAIVIVVTVAFVQE). The Cytoplasmic segment spans residues 122–262 (YRSEKSLEEL…PKTPLQKSMD (141 aa)). A helical transmembrane segment spans residues 263–282 (LLGKQLSFYSFGIIGIIMLV). Over 283–294 (GWLLGKDILEMF) the chain is Extracellular. A helical membrane pass occupies residues 295 to 316 (TISVSLAVAAIPEGLPIVVTVT). The Cytoplasmic portion of the chain corresponds to 317–699 (LALGVMRMVK…EGKGIYNNIK (383 aa)). Asp-349 (4-aspartylphosphate intermediate) is an active-site residue. Mg(2+) contacts are provided by Asp-643 and Asp-647. The chain crosses the membrane as a helical span at residues 700 to 722 (NFVRFQLSTSIAALTLISLATLM). Over 723 to 727 (NFPNP) the chain is Extracellular. A helical transmembrane segment spans residues 728-751 (LNAMQILWINIIMDGPPAQSLGVE). At 752-775 (PVDKDVIRKPPRNWKDSILTKNLI) the chain is on the cytoplasmic side. Residues 776–794 (LKILVSSIIIVCGTLFVFW) form a helical membrane-spanning segment. Over 795 to 801 (RELRDNV) the chain is Extracellular. A helical membrane pass occupies residues 802–827 (ITPRDTTMTFTCFVFFDMFNALSSRS). Topologically, residues 828-842 (QTKSVFEIGLCSNKM) are cytoplasmic. Residues 843-862 (FCYAVLGSIMGQLLVIYFPP) traverse the membrane as a helical segment. The Extracellular portion of the chain corresponds to 863–875 (LQKVFQTESLSIL). The helical transmembrane segment at 876–892 (DLLFLLGLTSSVCIVSE) threads the bilayer. Topologically, residues 893–918 (IIKKVERSREKVQKNAGSASSSFLEV) are cytoplasmic.

It belongs to the cation transport ATPase (P-type) (TC 3.A.3) family. Type IIA subfamily. In terms of assembly, monomer. Homodimer. As to expression, expressed in hippocampal neurons in the CA3 region of the Amon's horn (at protein level). Expressed in brain, heart, lung, stomach, liver, colon and mammary gland.

The protein localises to the golgi apparatus. It is found in the trans-Golgi network membrane. Its subcellular location is the golgi stack membrane. It carries out the reaction Ca(2+)(in) + ATP + H2O = Ca(2+)(out) + ADP + phosphate + H(+). The enzyme catalyses Mn(2+)(in) + ATP + H2O = Mn(2+)(out) + ADP + phosphate + H(+). In terms of biological role, ATP-driven pump that supplies the Golgi apparatus with Ca(2+) and Mn(2+) ions, both essential cofactors for processing and trafficking of newly synthesized proteins in the secretory pathway. Within a catalytic cycle, acquires Ca(2+) or Mn(2+) ions on the cytoplasmic side of the membrane and delivers them to the lumenal side. The transfer of ions across the membrane is coupled to ATP hydrolysis and is associated with a transient phosphorylation that shifts the pump conformation from inward-facing to outward-facing state. Plays a primary role in the maintenance of Ca(2+) homeostasis in the trans-Golgi compartment with a functional impact on Golgi and post-Golgi protein sorting as well as a structural impact on cisternae morphology. Responsible for loading the Golgi stores with Ca(2+) ions in keratinocytes, contributing to keratinocyte differentiation and epidermis integrity. Participates in Ca(2+) and Mn(2+) ions uptake into the Golgi store of hippocampal neurons and regulates protein trafficking required for neural polarity. May also play a role in the maintenance of Ca(2+) and Mn(2+) homeostasis and signaling in the cytosol while preventing cytotoxicity. The protein is Calcium-transporting ATPase type 2C member 1 of Mus musculus (Mouse).